Reading from the N-terminus, the 352-residue chain is Phenylalanine--tRNA ligase alpha subunit (352 aa).

Residue glutamate 258 coordinates Mg(2+).

The protein belongs to the class-II aminoacyl-tRNA synthetase family. Phe-tRNA synthetase alpha subunit type 1 subfamily. Tetramer of two alpha and two beta subunits. Mg(2+) serves as cofactor.

The protein resides in the cytoplasm. The catalysed reaction is tRNA(Phe) + L-phenylalanine + ATP = L-phenylalanyl-tRNA(Phe) + AMP + diphosphate + H(+). This Staphylococcus aureus (strain bovine RF122 / ET3-1) protein is Phenylalanine--tRNA ligase alpha subunit.